Here is a 1481-residue protein sequence, read N- to C-terminus: Chromosome partition protein MukB (1481 aa).

An ATP-binding site is contributed by G34–S41. Coiled coils occupy residues S338–Q480, Q509–W604, R780–S805, E835–G1116, and E1210–V1265. The tract at residues P666 to R783 is flexible hinge.

Belongs to the SMC family. MukB subfamily. Homodimerization via its hinge domain. Binds to DNA via its C-terminal region. Interacts, and probably forms a ternary complex, with MukE and MukF via its C-terminal region. The complex formation is stimulated by calcium or magnesium. Interacts with tubulin-related protein FtsZ.

Its subcellular location is the cytoplasm. It localises to the nucleoid. Functionally, plays a central role in chromosome condensation, segregation and cell cycle progression. Functions as a homodimer, which is essential for chromosome partition. Involved in negative DNA supercoiling in vivo, and by this means organize and compact chromosomes. May achieve or facilitate chromosome segregation by condensation DNA from both sides of a centrally located replisome during cell division. The protein is Chromosome partition protein MukB of Yersinia enterocolitica serotype O:8 / biotype 1B (strain NCTC 13174 / 8081).